The chain runs to 416 residues: Serine/threonine transporter SstT (416 aa).

The next 9 membrane-spanning stretches (helical) occupy residues 15–35, 49–69, 82–102, 141–161, 192–212, 217–237, 288–308, 330–350, and 356–376; these read SLVS…MFMP, VGAL…AAII, ILLL…VASF, ALMD…GIAM, LGIL…ALFG, LVVL…IIVF, VSIP…ITVL, VVAT…LLLI, and LFGI…IIGV.

It belongs to the dicarboxylate/amino acid:cation symporter (DAACS) (TC 2.A.23) family.

The protein localises to the cell inner membrane. It catalyses the reaction L-serine(in) + Na(+)(in) = L-serine(out) + Na(+)(out). The catalysed reaction is L-threonine(in) + Na(+)(in) = L-threonine(out) + Na(+)(out). Functionally, involved in the import of serine and threonine into the cell, with the concomitant import of sodium (symport system). In Aeromonas salmonicida (strain A449), this protein is Serine/threonine transporter SstT.